A 499-amino-acid chain; its full sequence is UTP--glucose-1-phosphate uridylyltransferase (499 aa).

S2 carries the post-translational modification N-acetylserine. Phosphoserine is present on S17. Residue T19 is modified to Phosphothreonine. 2 positions are modified to phosphoserine: S21 and S79. UTP-binding positions include 109-112 (LNGG), K123, Q186, and G215. 111–112 (GG) contacts substrate. Residue K123 participates in Mg(2+) binding. Substrate is bound by residues H216 and 244–246 (NGD). UTP is bound at residue D246. D246 is a Mg(2+) binding site. The residue at position 369 (R369) is an Omega-N-methylarginine. K388 contacts UTP. The active site involves K388. An oligomerization region spans residues 448-499 (HLTITGNVFLGKDVTLRGTVIIVCSDGHKIDIPNGSILENVVVTGNLQILEH).

Belongs to the UDPGP type 1 family. As to quaternary structure, homooctamer.

The catalysed reaction is alpha-D-glucose 1-phosphate + UTP + H(+) = UDP-alpha-D-glucose + diphosphate. Plays a central role as a glucosyl donor in cellular metabolic pathways. The sequence is that of UTP--glucose-1-phosphate uridylyltransferase from Saccharomyces cerevisiae (strain ATCC 204508 / S288c) (Baker's yeast).